Consider the following 391-residue polypeptide: Carbamoyl phosphate synthase small chain (391 aa).

The tract at residues 1–189 (MIKSALLVLE…DLPAAKQPED (189 aa)) is CPSase. L-glutamine contacts are provided by Ser47, Gly241, and Gly243. One can recognise a Glutamine amidotransferase type-1 domain in the interval 193-380 (HVVAYDYGVK…IELIEAYRAS (188 aa)). The active-site Nucleophile is Cys269. L-glutamine is bound by residues Leu270, Gln273, Asn311, Gly313, and Phe314. Catalysis depends on residues His353 and Glu355.

This sequence belongs to the CarA family. Composed of two chains; the small (or glutamine) chain promotes the hydrolysis of glutamine to ammonia, which is used by the large (or ammonia) chain to synthesize carbamoyl phosphate. Tetramer of heterodimers (alpha,beta)4.

It carries out the reaction hydrogencarbonate + L-glutamine + 2 ATP + H2O = carbamoyl phosphate + L-glutamate + 2 ADP + phosphate + 2 H(+). It catalyses the reaction L-glutamine + H2O = L-glutamate + NH4(+). It functions in the pathway amino-acid biosynthesis; L-arginine biosynthesis; carbamoyl phosphate from bicarbonate: step 1/1. Its pathway is pyrimidine metabolism; UMP biosynthesis via de novo pathway; (S)-dihydroorotate from bicarbonate: step 1/3. Small subunit of the glutamine-dependent carbamoyl phosphate synthetase (CPSase). CPSase catalyzes the formation of carbamoyl phosphate from the ammonia moiety of glutamine, carbonate, and phosphate donated by ATP, constituting the first step of 2 biosynthetic pathways, one leading to arginine and/or urea and the other to pyrimidine nucleotides. The small subunit (glutamine amidotransferase) binds and cleaves glutamine to supply the large subunit with the substrate ammonia. This chain is Carbamoyl phosphate synthase small chain, found in Yersinia pestis.